Reading from the N-terminus, the 101-residue chain is Small ribosomal subunit protein uS14 (101 aa).

The disordered stretch occupies residues 1 to 21 (MAKVSLIKKNESRKKKSQSLH). A compositionally biased stretch (basic residues) spans 11-21 (ESRKKKSQSLH).

It belongs to the universal ribosomal protein uS14 family. In terms of assembly, part of the 30S ribosomal subunit. Contacts proteins S3 and S10.

Functionally, binds 16S rRNA, required for the assembly of 30S particles and may also be responsible for determining the conformation of the 16S rRNA at the A site. This chain is Small ribosomal subunit protein uS14, found in Rickettsia canadensis (strain McKiel).